The following is a 289-amino-acid chain: O-methyltransferase asqN (289 aa).

D155 contributes to the S-adenosyl-L-methionine binding site. The active-site Proton acceptor is H195.

The protein belongs to the class I-like SAM-binding methyltransferase superfamily. Cation-independent O-methyltransferase family.

Its pathway is secondary metabolite biosynthesis. It participates in alkaloid biosynthesis. It functions in the pathway mycotoxin biosynthesis. Functionally, O-methyltransferase; part of the gene cluster that mediates the biosynthesis of the aspoquinolone mycotoxins. The role of asqN within the aspoquinolone pathway has still to be determined. The first step of the pathway is catalyzed by the nonribosomal peptide synthetase asqK that condenses anthranilic acid and O-methyl-L-tyrosine to produce 4'-methoxycyclopeptin. 4'-methoxycyclopeptin is then converted to 4'-methoxydehydrocyclopeptin by the ketoglutarate-dependent dioxygenase asqJ. AsqJ also converts its first product 4'-methoxydehydrocyclopeptin to 4'-methoxycyclopenin. The following conversion of 4'-methoxycyclopenin into 4'-methoxyviridicatin is catalyzed by the cyclopenase asqI. 4'-methoxyviridicatin is the precursor of quinolone natural products, and is further converted to quinolinone B. The prenyltransferase asqH1 then catalyzes the canonical Friedel-Crafts alkylation of quinolinone B with dimethylallyl cation to yield dimethylallyl quinolone, which is subjected to FAD-dependent dehydrogenation by the FAD-linked oxidoreductase asqF to yield conjugated aryl diene. The delta(3') double bond then serves as the site of the second alkylation with DMAPP catalyzed by the prenyltransferase asqH2 to yield a carbenium ion intermediate, which can be attacked by H(2)O to yield a styrenyl quinolone containing a C3'-hydroxyprenyl chain. The FAD-dependent monooxygenase asqG performs epoxidation of the terminal C7'-C8' olefin. Finally, after dehydratation of the epoxide at C3 by asqC, the quinolone epoxide rearrangement protein asqO catalyzes an enzymatic 3-exo-tet cyclization to yield the cyclopropyl-THF ring system in aspoquinolone. The sequence is that of O-methyltransferase asqN from Emericella nidulans (strain FGSC A4 / ATCC 38163 / CBS 112.46 / NRRL 194 / M139) (Aspergillus nidulans).